A 70-amino-acid chain; its full sequence is MLDPFCFLKMYLKERVEVKTKSGEAYTGTLEGFDEHINLMLTCSSVEGSEDKVLFLRGENILFVGPRLLL.

Residues 3 to 70 form the Sm domain; sequence DPFCFLKMYL…ILFVGPRLLL (68 aa).

It belongs to the snRNP Sm proteins family.

The protein resides in the nucleus. In terms of biological role, binds specifically to the 3'-terminal U-tract of U6 snRNA. The sequence is that of Probable U6 snRNA-associated Sm-like protein from Encephalitozoon cuniculi (strain GB-M1) (Microsporidian parasite).